Reading from the N-terminus, the 436-residue chain is Amino acid transporter AVT3C (436 aa).

Polar residues predominate over residues 1–13 (MGFQNEASSSSYT). The disordered stretch occupies residues 1-21 (MGFQNEASSSSYTLKIPPPAR). Over 1–38 (MGFQNEASSSSYTLKIPPPAREDSPLLGKGPPLSSQFK) the chain is Cytoplasmic. Residues 39-59 (TFANVFIAVVGAGVLGLPYAF) traverse the membrane as a helical segment. At 60–65 (KRTGWL) the chain is on the vacuolar side. Residues 66-86 (MGVLLLVSVSVLTHHCMMLLV) traverse the membrane as a helical segment. The Cytoplasmic segment spans residues 87-118 (YTRRKLDSFNAGISKIGSFGDLGFAVCGSLGR). A helical membrane pass occupies residues 119–139 (IVVDLFIILSQAGFCVGYLIF). At 140-166 (IGTTLANLSDPESPTSLRHQFTRLGSE) the chain is on the vacuolar side. A helical transmembrane segment spans residues 167-187 (FLGVSSKSLYIWGCFPFQLGL). Residues 188-195 (NSIKTLTH) lie on the Cytoplasmic side of the membrane. The chain crosses the membrane as a helical span at residues 196 to 216 (LAPLSIFADIVDLGAMAVVIV). The Vacuolar segment spans residues 217–228 (EDSMIILKQRPD). Residues 229–249 (VVAFGGMSLFLYGMGVAVYSF) traverse the membrane as a helical segment. At 250 to 273 (EGVGMVLPLESEMKDKDKFGKVLA) the chain is on the cytoplasmic side. A helical membrane pass occupies residues 274-294 (LGMGFISLIYIAFGILGYLAF). Residues 295–309 (GEDTMDIITANLGAG) lie on the Vacuolar side of the membrane. The helical transmembrane segment at 310 to 330 (LVSTVVQLGLCINLFFTFPLM) threads the bilayer. Residues 331–352 (MNPVFEIVERRFSRGMYSAWLR) lie on the Cytoplasmic side of the membrane. Residues 353–373 (WVLVLAVTLVALFVPNFADFL) traverse the membrane as a helical segment. Residues 374–376 (SLV) lie on the Vacuolar side of the membrane. Residues 377–397 (GSSTCCVLGFVLPALFHLLVF) form a helical membrane-spanning segment. The Cytoplasmic portion of the chain corresponds to 398–411 (KEEMGWLQWSSDTA). A helical membrane pass occupies residues 412–432 (IVVLGVVLAVSGTWSSLSEIF). Residues 433–436 (SVKV) are Vacuolar-facing.

The protein belongs to the amino acid/polyamine transporter 2 family. Amino acid/auxin permease (AAAP) (TC 2.A.18.8) subfamily. Ubiquitous.

The protein localises to the vacuole membrane. Translocates preferentially neutral amino acids from the vacuole to the cytoplasm. This Arabidopsis thaliana (Mouse-ear cress) protein is Amino acid transporter AVT3C.